The chain runs to 579 residues: MTDHKIIMLLLLGIYCIQATQFTQVNIDNGPIKGTLQYVEGRAIRVFKGIPFAEPPVNNLRWKAPVPYTKKWHNPLNTTEYKPKCPQYVAPGTVPEPRGISEDCLYTNVWAPVPEYHGETFPVMVWIHGGAFISGSPEDFGVGNFSILAVTKRIIIVAASYRVNAFGFFSSELLGKSQLEARGVYGLLDQRLGLKWVKNNIAAFGGKSKDITIYGQSAGGISVCLQAVTPLNDLPGEKLFTRVIGSSGYCDILPMTNNSADAGLVQKLNCTTKECLYALPWQNITNAVGPGFLSFQPTVGINKFLPDQPISLLADRTNPRSKNFVPDIYMQGFTANEGTFVLYNYFPQTYDNPNTPGFPTQQMADALSIASGNYSAEFYYNDLAPLYSTEYNSNVTYPGQGFISRVDDIMACNTRRNMIYWQQSKKTKAHSWYFDSAPDTHIYPSWTKVFHESDVFYVARRCDGLWCTNLTCQQDNLGKTMNIYWNSAIRAASLTPKNKMDNLRDVPVWPQYGKNEVVMHFTAVGENKGPQTSVLFSSIISADGDYQYLQRCKILDRVRAEYYNIPALDPETYLNACSK.

An N-terminal signal peptide occupies residues 1–19 (MTDHKIIMLLLLGIYCIQA). Residues Asn77 and Asn144 are each glycosylated (N-linked (GlcNAc...) asparagine; by host). Ser217 acts as the Acyl-ester intermediate in catalysis. N-linked (GlcNAc...) asparagine; by host glycans are attached at residues Asn257, Asn269, and Asn283. Glu337 (charge relay system) is an active-site residue. Asn373 and Asn394 each carry an N-linked (GlcNAc...) asparagine; by host glycan. His451 (charge relay system) is an active-site residue. An N-linked (GlcNAc...) asparagine; by host glycan is attached at Asn469.

This sequence belongs to the type-B carboxylesterase/lipase family.

It carries out the reaction an acylcholine + H2O = a carboxylate + choline + H(+). In terms of biological role, may be involved in the disruption of the host membrane. The chain is Probable cholinesterase from Acanthamoeba polyphaga mimivirus (APMV).